Reading from the N-terminus, the 183-residue chain is ATP synthase subunit delta (183 aa).

The protein belongs to the ATPase delta chain family. In terms of assembly, F-type ATPases have 2 components, F(1) - the catalytic core - and F(0) - the membrane proton channel. F(1) has five subunits: alpha(3), beta(3), gamma(1), delta(1), epsilon(1). F(0) has three main subunits: a(1), b(2) and c(10-14). The alpha and beta chains form an alternating ring which encloses part of the gamma chain. F(1) is attached to F(0) by a central stalk formed by the gamma and epsilon chains, while a peripheral stalk is formed by the delta and b chains.

It localises to the cell membrane. In terms of biological role, f(1)F(0) ATP synthase produces ATP from ADP in the presence of a proton or sodium gradient. F-type ATPases consist of two structural domains, F(1) containing the extramembraneous catalytic core and F(0) containing the membrane proton channel, linked together by a central stalk and a peripheral stalk. During catalysis, ATP synthesis in the catalytic domain of F(1) is coupled via a rotary mechanism of the central stalk subunits to proton translocation. Functionally, this protein is part of the stalk that links CF(0) to CF(1). It either transmits conformational changes from CF(0) to CF(1) or is implicated in proton conduction. The chain is ATP synthase subunit delta from Oenococcus oeni (strain ATCC BAA-331 / PSU-1).